The following is a 121-amino-acid chain: Small ribosomal subunit protein bS16 (121 aa).

A compositionally biased stretch (basic and acidic residues) spans 97-114; that stretch reads LAKAKTKDGDNDSSKAES. Residues 97 to 121 are disordered; that stretch reads LAKAKTKDGDNDSSKAESESNEAET.

This sequence belongs to the bacterial ribosomal protein bS16 family.

The protein is Small ribosomal subunit protein bS16 of Prochlorococcus marinus (strain MIT 9301).